Consider the following 163-residue polypeptide: CDP-archaeol synthase (163 aa).

5 helical membrane passes run 4-24 (LLLGLIYYIPALVANGSAPFI), 52-72 (LLLSLTFGTTVGAIISRFLGI), 75-95 (IIIGFVESLGAMLGDMLGAFI), 107-127 (APILDQLDFILGATVVLISFN), and 128-148 (VNLNIYQVVFVCVLVIALHMF).

The protein belongs to the CDP-archaeol synthase family. It depends on Mg(2+) as a cofactor.

The protein resides in the cell membrane. It catalyses the reaction 2,3-bis-O-(geranylgeranyl)-sn-glycerol 1-phosphate + CTP + H(+) = CDP-2,3-bis-O-(geranylgeranyl)-sn-glycerol + diphosphate. The protein operates within membrane lipid metabolism; glycerophospholipid metabolism. In terms of biological role, catalyzes the formation of CDP-2,3-bis-(O-geranylgeranyl)-sn-glycerol (CDP-archaeol) from 2,3-bis-(O-geranylgeranyl)-sn-glycerol 1-phosphate (DGGGP) and CTP. This reaction is the third ether-bond-formation step in the biosynthesis of archaeal membrane lipids. The sequence is that of CDP-archaeol synthase from Sulfolobus acidocaldarius (strain ATCC 33909 / DSM 639 / JCM 8929 / NBRC 15157 / NCIMB 11770).